A 431-amino-acid chain; its full sequence is F-box protein pof14 (431 aa).

Positions 172 to 186 (CPDEILQLIFSYCYD) constitute an F-box; atypical domain.

Component of the E3 ubiquitin ligase Skp1-Cullin-1-F-box (SCF) complex. Interacts with skp1, cul1 and erg9.

It is found in the cytoplasm. Its subcellular location is the nucleus. The protein resides in the endoplasmic reticulum. Its function is as follows. Expression is induced during oxidative stress. Plays an essential, SCF-independent, role in the stress response to hydrogen peroxide for survival, by negatively regulating ergosterol synthesis via direct binding to the squalene synthase erg9. The protein is F-box protein pof14 (pof14) of Schizosaccharomyces pombe (strain 972 / ATCC 24843) (Fission yeast).